The sequence spans 463 residues: Glycine--tRNA ligase (463 aa).

2 residues coordinate substrate: Arg102 and Glu165. Residues 197 to 199 (RNE), 207 to 212 (FRTREF), 284 to 285 (EL), and 328 to 331 (GLTR) contribute to the ATP site. 212–216 (FEQME) contacts substrate. 324–328 (EPAAG) is a binding site for substrate.

The protein belongs to the class-II aminoacyl-tRNA synthetase family. Homodimer.

It localises to the cytoplasm. It carries out the reaction tRNA(Gly) + glycine + ATP = glycyl-tRNA(Gly) + AMP + diphosphate. Catalyzes the attachment of glycine to tRNA(Gly). The sequence is that of Glycine--tRNA ligase from Mycobacterium bovis (strain ATCC BAA-935 / AF2122/97).